The chain runs to 232 residues: Small ribosomal subunit protein uS3 (232 aa).

A KH type-2 domain is found at 39 to 107 (VRQFLTKELA…PAQINIAEVR (69 aa)).

The protein belongs to the universal ribosomal protein uS3 family. Part of the 30S ribosomal subunit. Forms a tight complex with proteins S10 and S14.

In terms of biological role, binds the lower part of the 30S subunit head. Binds mRNA in the 70S ribosome, positioning it for translation. This chain is Small ribosomal subunit protein uS3, found in Erwinia tasmaniensis (strain DSM 17950 / CFBP 7177 / CIP 109463 / NCPPB 4357 / Et1/99).